The sequence spans 165 residues: (2E)-enoyl-[ACP] glycyltransferase (165 aa).

Belongs to the FcoT family.

It carries out the reaction a (3R)-3-[(carboxymethyl)amino]fatty acid + holo-[ACP] + H(+) = a (2E)-enoyl-[ACP] + glycine + H2O. It catalyses the reaction (3R)-3-[(carboxymethyl)amino]butanoate + holo-[ACP] + H(+) = (2E)-butenoyl-[ACP] + glycine + H2O. Functionally, involved in the biosynthesis of a unique class of isonitrile lipopeptides (INLPs). Catalyzes a Michael addition of glycine to the beta-position of an alpha,beta-unsaturated fatty acyl-[ACP], producing a (3R)-3-[(carboxymethyl)amino]fatty acid. Acts on the (2E)-butenoyl moiety loaded on the acyl-carrier protein ScoB, forming the product (3R)-3-[(carboxymethyl)amino]butanoate released from ScoB. The sequence is that of (2E)-enoyl-[ACP] glycyltransferase from Streptomyces coeruleorubidus.